Reading from the N-terminus, the 611-residue chain is DNA-directed RNA polymerase subunit Rpo2C (611 aa).

Zn(2+) contacts are provided by C547, C550, C565, and C568.

Belongs to the RNA polymerase beta chain family. Part of the RNA polymerase complex. The cofactor is Zn(2+).

The protein localises to the cytoplasm. The catalysed reaction is RNA(n) + a ribonucleoside 5'-triphosphate = RNA(n+1) + diphosphate. Functionally, DNA-dependent RNA polymerase (RNAP) catalyzes the transcription of DNA into RNA using the four ribonucleoside triphosphates as substrates. The Rpo2 subunit (Rpo2N and Rpo2C in this organism) is implicated in DNA promoter recognition and in nucleotide binding. This is DNA-directed RNA polymerase subunit Rpo2C from Methanococcus vannielii (strain ATCC 35089 / DSM 1224 / JCM 13029 / OCM 148 / SB).